A 220-amino-acid polypeptide reads, in one-letter code: Octanoyltransferase (220 aa).

A BPL/LPL catalytic domain is found at 31–217; that stretch reads ENTPDEIWLV…HFAEILGYNA (187 aa). Substrate is bound by residues 70–77, 146–148, and 159–161; these read RGGQITYH, SLG, and GLA. C177 acts as the Acyl-thioester intermediate in catalysis.

This sequence belongs to the LipB family.

The protein localises to the cytoplasm. It catalyses the reaction octanoyl-[ACP] + L-lysyl-[protein] = N(6)-octanoyl-L-lysyl-[protein] + holo-[ACP] + H(+). Its pathway is protein modification; protein lipoylation via endogenous pathway; protein N(6)-(lipoyl)lysine from octanoyl-[acyl-carrier-protein]: step 1/2. Catalyzes the transfer of endogenously produced octanoic acid from octanoyl-acyl-carrier-protein onto the lipoyl domains of lipoate-dependent enzymes. Lipoyl-ACP can also act as a substrate although octanoyl-ACP is likely to be the physiological substrate. The sequence is that of Octanoyltransferase from Actinobacillus succinogenes (strain ATCC 55618 / DSM 22257 / CCUG 43843 / 130Z).